Here is a 451-residue protein sequence, read N- to C-terminus: Phosphoglucosamine mutase (451 aa).

Serine 101 (phosphoserine intermediate) is an active-site residue. Residues serine 101, aspartate 240, aspartate 242, and aspartate 244 each contribute to the Mg(2+) site. Serine 101 carries the phosphoserine modification.

This sequence belongs to the phosphohexose mutase family. Mg(2+) is required as a cofactor. Post-translationally, activated by phosphorylation.

It carries out the reaction alpha-D-glucosamine 1-phosphate = D-glucosamine 6-phosphate. In terms of biological role, catalyzes the conversion of glucosamine-6-phosphate to glucosamine-1-phosphate. The chain is Phosphoglucosamine mutase from Streptococcus pyogenes serotype M12 (strain MGAS2096).